Reading from the N-terminus, the 802-residue chain is Receptor-type tyrosine-protein phosphatase alpha (802 aa).

The first 19 residues, 1 to 19 (MDSWFILVLLGSGLICVSA), serve as a signal peptide directing secretion. Residues 20-151 (NNATTVAPSV…DSKDRRDETP (132 aa)) lie on the Extracellular side of the membrane. Asparagine 21 and asparagine 36 each carry an N-linked (GlcNAc...) asparagine glycan. The disordered stretch occupies residues 39–59 (TAEPVKEEAKTSNPTSSLTSL). Asparagine 68, asparagine 80, asparagine 86, asparagine 104, and asparagine 124 each carry an N-linked (GlcNAc...) asparagine glycan. 2 stretches are compositionally biased toward polar residues: residues 79–115 (VNSS…QFTD) and 123–141 (GNSS…SGNS). The disordered stretch occupies residues 79 to 146 (VNSSDSDNGT…PSGNSDSKDR (68 aa)). Residues 152–174 (IIAVMVALSSLLVIVFIIIVLYM) form a helical membrane-spanning segment. The Cytoplasmic segment spans residues 175-802 (LRFKKYKQAG…DAFSDYANFK (628 aa)). Residues serine 211 and serine 213 each carry the phosphoserine modification. Tyrosine-protein phosphatase domains follow at residues 241 to 501 (FREE…LLEH) and 533 to 791 (LEEE…VQEY). Substrate-binding positions include aspartate 410, 442–448 (CSAGVGR), and glutamine 486. The Phosphocysteine intermediate role is filled by cysteine 442. Catalysis depends on cysteine 732, which acts as the Phosphocysteine intermediate. Position 798 is a phosphotyrosine (tyrosine 798).

Belongs to the protein-tyrosine phosphatase family. Receptor class 4 subfamily. As to quaternary structure, part of a complex comprised of PTPRA, BCAR1, BCAR3 (via SH2 domain), and SRC. Within the complex, interacts (when phosphorylated on Tyr-798) with BCAR3 (via SH2 domain). Interacts with GRB2. Post-translationally, integrin binding to extracellular matrix induces phosphorylation at Tyr-798 which induces PTPRA localization and recruitment of BCAR3, BCAR1 and CRK to focal adhesions.

It localises to the cell membrane. It is found in the cell junction. Its subcellular location is the focal adhesion. It catalyses the reaction O-phospho-L-tyrosyl-[protein] + H2O = L-tyrosyl-[protein] + phosphate. In terms of biological role, tyrosine protein phosphatase which is involved in integrin-mediated focal adhesion formation. Following integrin engagement, specifically recruits BCAR3, BCAR1 and CRK to focal adhesions thereby promoting SRC-mediated phosphorylation of BRAC1 and the subsequent activation of PAK and small GTPase RAC1 and CDC42. This is Receptor-type tyrosine-protein phosphatase alpha (PTPRA) from Homo sapiens (Human).